Reading from the N-terminus, the 105-residue chain is Small ribosomal subunit protein uS10 (105 aa).

It belongs to the universal ribosomal protein uS10 family. Part of the 30S ribosomal subunit.

Its function is as follows. Involved in the binding of tRNA to the ribosomes. The polypeptide is Small ribosomal subunit protein uS10 (Nostoc punctiforme (strain ATCC 29133 / PCC 73102)).